Here is a 361-residue protein sequence, read N- to C-terminus: 45 kDa calcium-binding protein (361 aa).

The signal sequence occupies residues 1–35 (MVWLVAMTPRQSSLCGLAAHGLWFLGLVLLMDATA). The N-linked (GlcNAc...) asparagine glycan is linked to Asn39. EF-hand domains lie at 97–132 (RSRR…KTAE) and 136–171 (EAVK…SKGH). Ser98 carries the post-translational modification Phosphoserine. The Ca(2+) site is built by Asp110, Asn112, Asp114, Arg116, Glu121, Asp149, Asp151, Asp153, His155, and Glu160. Thr192 carries the phosphothreonine modification. 4 consecutive EF-hand domains span residues 196–231 (LGNL…HSRG), 232–267 (MLKF…TVEN), 277–312 (WVKD…MNEY), and 313–348 (NALN…FTGS). Asp212 provides a ligand contact to Ca(2+). Thr216 carries the phosphothreonine modification. 6 residues coordinate Ca(2+): Glu219, Asp245, Asp247, Asp249, Gln251, and Glu256. Thr264 carries the post-translational modification Phosphothreonine. Residues Asp290, Asn292, and Asp294 each contribute to the Ca(2+) site. Thr298 carries the post-translational modification Phosphothreonine. Ca(2+) is bound by residues Glu301, Asp326, Asn328, Asn330, His332, and Glu337. Residues 308–361 (PMNEYNALNEAKQMIAIADENQNHHLEPEEILKYSEFFTGSKLMDYARNVHEEF) form a necessary for intracellular retention in Golgi apparatus lumen region.

It belongs to the CREC family. In terms of tissue distribution, ubiquitous.

It is found in the golgi apparatus lumen. In terms of biological role, may regulate calcium-dependent activities in the endoplasmic reticulum lumen or post-ER compartment. The chain is 45 kDa calcium-binding protein (Sdf4) from Mus musculus (Mouse).